A 65-amino-acid polypeptide reads, in one-letter code: Large ribosomal subunit protein bL33c (65 aa).

The protein belongs to the bacterial ribosomal protein bL33 family.

It localises to the plastid. The chain is Large ribosomal subunit protein bL33c from Aneura mirabilis (Parasitic liverwort).